The primary structure comprises 561 residues: Sensor histidine kinase BtsS (561 aa).

Topologically, residues 1–3 (MYD) are cytoplasmic. A helical transmembrane segment spans residues 4-24 (FNLVLLLLQQMCVFLVIAWLM). Topologically, residues 25-43 (SKTPLFIPLMQVTVRLPHK) are periplasmic. The chain crosses the membrane as a helical span at residues 44 to 64 (FLCYIVFSIFCIMGTWFGLHI). Residues 65-72 (DDSIANTR) lie on the Cytoplasmic side of the membrane. A helical transmembrane segment spans residues 73 to 93 (AIGAVMGGLLGGPVVGGLVGL). Over 94 to 108 (TGGLHRYSMGGMTAL) the chain is Periplasmic. Residues 109-129 (SCMISTIVEGLLGGLVHSILI) form a helical membrane-spanning segment. Over 130–140 (RRGRTDKVFNP) the chain is Cytoplasmic. The helical transmembrane segment at 141–161 (ITAGAVTFVAEMVQMLIILAI) threads the bilayer. The Periplasmic portion of the chain corresponds to 162-170 (ARPYEDAVR). The helical transmembrane segment at 171–191 (LVSNIAAPMMVTNTVGAALFM) threads the bilayer. Residues 192-561 (RILLDKRAMF…TLRLPWRDEA (370 aa)) are Cytoplasmic-facing. In terms of domain architecture, Histidine kinase spans 354-559 (QILAGQYERQ…RITLRLPWRD (206 aa)).

In terms of processing, autophosphorylated.

It is found in the cell inner membrane. The enzyme catalyses ATP + protein L-histidine = ADP + protein N-phospho-L-histidine.. Its function is as follows. Member of the two-component regulatory system BtsS/BtsR. BtsS is a high-affinity receptor for extracellular pyruvate that activates BtsR by phosphorylation. The polypeptide is Sensor histidine kinase BtsS (Escherichia coli O6:H1 (strain CFT073 / ATCC 700928 / UPEC)).